The chain runs to 374 residues: MNAPDSFQTDLDALHEDMARANMAPTWKYVSDFVAKEPRVGFRPWLWRWNDVLPLLMRAGDLITPERGAERRSMEHVNPDLKSAYSTSHTIATAFQLVRAGETAPAHRHAAAAIRFAARSKGGSVYTRVQGERLMMEEFDLLLTPAGTWHEHANETANDIVWLDALDFPLVNLLKASVFEPGDSDTCEPKPDDFSRQHLGLYRPVGWSDYPEPHPVMRYPWVEMKAALDAAASSGATGSPFDGIVMAYTNPLNSGPTLPTLSCRAQLLRPKESTCAHRATSSTVYFVISGTGTTVVNGTAYRWGPGDVFVVPNWAWHEHLNGDSDAYLFSITDEPVMRTLGIYREQAYAAPGPHQLITGEFDSTQQCVRELSSL.

It belongs to the gentisate 1,2-dioxygenase family. The cofactor is Fe(2+).

It catalyses the reaction 5-amino-2-hydroxybenzoate + O2 = (2Z,4E)-4-amino-6-oxohepta-2,4-dienedioate + H(+). Its activity is regulated as follows. Inhibited by SDS and o-phenanthroline, a ferrous iron chelator. Partially inhibited by EDTA. Functionally, involved in the biodegradation of 3-aminobenzoate. Catalyzes the cleavage of the 5-aminosalicylate (5ASA) aromatic ring to form 4-amino-6-oxohepta-2,4-dienedioate (cis-ACOHDA). Can also convert gentisate, but the catalytic efficiency with 5ASA is 70-fold higher. This Comamonas sp protein is 5-aminosalicylate 1,2-dioxygenase.